Consider the following 180-residue polypeptide: Small ribosomal subunit protein uS5 (180 aa).

Positions 1-26 (MAEEKDKKQSSRRRNNRRTEKESEWQ) are disordered. The segment covering 17-26 (RRTEKESEWQ) has biased composition (basic and acidic residues). In terms of domain architecture, S5 DRBM spans 25 to 88 (WQERVVQIRR…ADGKKHLVNV (64 aa)).

It belongs to the universal ribosomal protein uS5 family. Part of the 30S ribosomal subunit. Contacts proteins S4 and S8.

With S4 and S12 plays an important role in translational accuracy. Its function is as follows. Located at the back of the 30S subunit body where it stabilizes the conformation of the head with respect to the body. The chain is Small ribosomal subunit protein uS5 from Synechococcus elongatus (strain ATCC 33912 / PCC 7942 / FACHB-805) (Anacystis nidulans R2).